Here is a 377-residue protein sequence, read N- to C-terminus: Secreted LysM effector Lys2 (377 aa).

The signal sequence occupies residues 1–22 (MVRQSIGLIALQLLNLVSVAQA). Low complexity predominate over residues 104–119 (TSSSTATTTSQKPTAT). Residues 104–124 (TSSSTATTTSQKPTATVSPLP) form a disordered region. 2 consecutive LysM domains span residues 135–182 (KYYN…YVCV) and 207–253 (KYYK…YYCV).

This sequence belongs to the secreted LysM effector family.

Might have a role in sequestration of chitin oligosaccharides (breakdown products of fungal cell walls that are released during invasion and act as triggers of host immunity) to dampen host defense. The chain is Secreted LysM effector Lys2 from Pochonia chlamydosporia (strain 123) (Metacordyceps chlamydosporia).